We begin with the raw amino-acid sequence, 79 residues long: Cell division protein ZapB (79 aa).

Residues 3 to 79 (LEVFEKLEAK…QALLGRMEEV (77 aa)) adopt a coiled-coil conformation. Positions 36–45 (SLTQEVQSAQ) are enriched in polar residues. Residues 36–63 (SLTQEVQSAQHQREELERENNSLKEQQS) are disordered. Residues 46-57 (HQREELERENNS) show a composition bias toward basic and acidic residues.

It belongs to the ZapB family. As to quaternary structure, homodimer. The ends of the coiled-coil dimer bind to each other, forming polymers. Interacts with FtsZ.

The protein resides in the cytoplasm. Functionally, non-essential, abundant cell division factor that is required for proper Z-ring formation. It is recruited early to the divisome by direct interaction with FtsZ, stimulating Z-ring assembly and thereby promoting cell division earlier in the cell cycle. Its recruitment to the Z-ring requires functional FtsA or ZipA. The polypeptide is Cell division protein ZapB (Salmonella agona (strain SL483)).